Consider the following 241-residue polypeptide: Probable transcriptional regulatory protein PSHAb0060 (241 aa).

Belongs to the TACO1 family.

It localises to the cytoplasm. The protein is Probable transcriptional regulatory protein PSHAb0060 of Pseudoalteromonas translucida (strain TAC 125).